The chain runs to 471 residues: Putative multidrug resistance protein MdtD (471 aa).

The Periplasmic portion of the chain corresponds to 1 to 11 (MTDLPDSTRWQ). The helical transmembrane segment at 12–32 (LWIVAFGFFMQSLDTTIVNTA) threads the bilayer. Over 33 to 48 (LPSMAQSLGESPLHMH) the chain is Cytoplasmic. Residues 49 to 69 (MVIVSYVLTVAVMLPASGWLA) form a helical membrane-spanning segment. The Periplasmic segment spans residues 70–76 (DKVGVRN). Residues 77–97 (IFFTAIVLFTLGSLFCALSGT) traverse the membrane as a helical segment. The Cytoplasmic portion of the chain corresponds to 98-101 (LNEL). The chain crosses the membrane as a helical span at residues 102–124 (LLARALQGVGGAMMVPVGRLTVM). The Periplasmic segment spans residues 125–137 (KIVPREQYMAAMT). The chain crosses the membrane as a helical span at residues 138-158 (FVTLPGQVGPLLGPALGGLLV). Residues 159 to 164 (EYASWH) lie on the Cytoplasmic side of the membrane. The helical transmembrane segment at 165–185 (WIFLINIPVGIIGAIATLMLM) threads the bilayer. Topologically, residues 186 to 196 (PNYTMQTRRFD) are periplasmic. A helical membrane pass occupies residues 197 to 217 (LSGFLLLAVGMAVLTLALDGS). Residues 218–224 (KGTGFSP) lie on the Cytoplasmic side of the membrane. A helical transmembrane segment spans residues 225–245 (LAIAGLVAVGVVALVLYLLHA). The Periplasmic portion of the chain corresponds to 246–262 (QNNNRALFSLKLFRTRT). Residues 263–283 (FSLGLAGSFAGRIGSGMLPFM) traverse the membrane as a helical segment. Over 284-285 (TP) the chain is Cytoplasmic. The helical transmembrane segment at 286–306 (VFLQIGLGFSPFHAGLMMIPM) threads the bilayer. Over 307–341 (VLGSMGMKRIVVQVVNRFGYRRVLVATTLGLSLVT) the chain is Periplasmic. A helical transmembrane segment spans residues 342-362 (LLFMTTALLGWYYVLPFVLFL). Over 363-395 (QGMVNSTRFSSMNTLTLKDLPDNLASSGNSLLS) the chain is Cytoplasmic. A helical membrane pass occupies residues 396–416 (MIMQLSMSIGVTIAGLLLGLF). Residues 417–430 (GSQHVSVDSGTTQT) are Periplasmic-facing. A helical membrane pass occupies residues 431–451 (VFMYTWLSMAFIIALPAFVFA). The Cytoplasmic segment spans residues 452–471 (RVPSDTHQNVAISRRKRSAQ).

Belongs to the major facilitator superfamily. TCR/Tet family.

It localises to the cell inner membrane. The protein is Putative multidrug resistance protein MdtD of Escherichia coli O45:K1 (strain S88 / ExPEC).